We begin with the raw amino-acid sequence, 186 residues long: Large ribosomal subunit protein uL5 (186 aa).

Belongs to the universal ribosomal protein uL5 family. Part of the 50S ribosomal subunit; contacts the 5S rRNA and probably tRNA. Forms a bridge to the 30S subunit in the 70S ribosome.

Functionally, this is one of the proteins that bind and probably mediate the attachment of the 5S RNA into the large ribosomal subunit, where it forms part of the central protuberance. In the 70S ribosome it contacts protein S13 of the 30S subunit (bridge B1b), connecting the 2 subunits; this bridge is implicated in subunit movement. May contact the P site tRNA; the 5S rRNA and some of its associated proteins might help stabilize positioning of ribosome-bound tRNAs. This chain is Large ribosomal subunit protein uL5, found in Pyrococcus furiosus (strain ATCC 43587 / DSM 3638 / JCM 8422 / Vc1).